Reading from the N-terminus, the 1163-residue chain is Ankyrin repeat-containing protein F37A4.4 (1163 aa).

One copy of the ANK repeat lies at 856-885 (YGNTALHVATRRGYQNLVEILIKHGADRSF). The region spanning 929–1025 (LCVPEKFPVS…KLIEKDCDYL (97 aa)) is the BRCT domain.

This Caenorhabditis elegans protein is Ankyrin repeat-containing protein F37A4.4.